Here is a 74-residue protein sequence, read N- to C-terminus: Large ribosomal subunit protein bL31 (74 aa).

Residues Cys-16, Cys-18, Cys-38, and Cys-41 each contribute to the Zn(2+) site.

Belongs to the bacterial ribosomal protein bL31 family. Type A subfamily. Part of the 50S ribosomal subunit. Zn(2+) serves as cofactor.

Its function is as follows. Binds the 23S rRNA. The protein is Large ribosomal subunit protein bL31 of Acinetobacter baylyi (strain ATCC 33305 / BD413 / ADP1).